A 182-amino-acid polypeptide reads, in one-letter code: Large ribosomal subunit protein uL6 (182 aa).

Belongs to the universal ribosomal protein uL6 family. As to quaternary structure, part of the 50S ribosomal subunit.

Functionally, this protein binds to the 23S rRNA, and is important in its secondary structure. It is located near the subunit interface in the base of the L7/L12 stalk, and near the tRNA binding site of the peptidyltransferase center. The sequence is that of Large ribosomal subunit protein uL6 from Carboxydothermus hydrogenoformans (strain ATCC BAA-161 / DSM 6008 / Z-2901).